Here is a 356-residue protein sequence, read N- to C-terminus: MKPSLLDFRLKELQANIKPSFRAKQIYGWLYHNYAQSFDDMKNIPQQLKDELAKSYVVNLLKIVKKELSNDGTIKYLFELQDGKTIETVWLKMKDEQIDEEGCVTQEAKYTICVSTQVGCKVGCAFCLTAKGGFTRDLTAGEIVAQVVALKKDNDHKHNRMINIVYMGMGEPLDNLDNLSRAIEIFKEEDGLCISGKRQTVSTSGLSNKIDRLGEMDLGVHIAISLHAVDDELRTELIPMNKAHNISSIIEAVKRFPIDTRKRVMFEYLVIKNKNDDLGSAKKLVKLLSGIKAKVNLIYFNPYPDTPYERPQKSDMIAFQEYLINHGLLCTIRDSKGIDISAACGQLKEKTQSELQ.

The Proton acceptor role is filled by Glu87. In terms of domain architecture, Radical SAM core spans 106-339; it reads QEAKYTICVS…CTIRDSKGID (234 aa). A disulfide bridge connects residues Cys113 and Cys344. The [4Fe-4S] cluster site is built by Cys120, Cys124, and Cys127. S-adenosyl-L-methionine is bound by residues 170-171, Ser202, 225-227, and Asn301; these read GE and SLH. Cys344 (S-methylcysteine intermediate) is an active-site residue.

The protein belongs to the radical SAM superfamily. RlmN family. [4Fe-4S] cluster serves as cofactor.

The protein localises to the cytoplasm. It catalyses the reaction adenosine(2503) in 23S rRNA + 2 reduced [2Fe-2S]-[ferredoxin] + 2 S-adenosyl-L-methionine = 2-methyladenosine(2503) in 23S rRNA + 5'-deoxyadenosine + L-methionine + 2 oxidized [2Fe-2S]-[ferredoxin] + S-adenosyl-L-homocysteine. The catalysed reaction is adenosine(37) in tRNA + 2 reduced [2Fe-2S]-[ferredoxin] + 2 S-adenosyl-L-methionine = 2-methyladenosine(37) in tRNA + 5'-deoxyadenosine + L-methionine + 2 oxidized [2Fe-2S]-[ferredoxin] + S-adenosyl-L-homocysteine. In terms of biological role, specifically methylates position 2 of adenine 2503 in 23S rRNA and position 2 of adenine 37 in tRNAs. m2A2503 modification seems to play a crucial role in the proofreading step occurring at the peptidyl transferase center and thus would serve to optimize ribosomal fidelity. This is Dual-specificity RNA methyltransferase RlmN from Sulfurimonas denitrificans (strain ATCC 33889 / DSM 1251) (Thiomicrospira denitrificans (strain ATCC 33889 / DSM 1251)).